The chain runs to 388 residues: Cystathionine gamma-synthase (388 aa).

K208 is subject to N6-(pyridoxal phosphate)lysine.

It belongs to the trans-sulfuration enzymes family. In terms of assembly, homotetramer. Pyridoxal 5'-phosphate serves as cofactor.

It is found in the cytoplasm. The enzyme catalyses O-succinyl-L-homoserine + L-cysteine = L,L-cystathionine + succinate + H(+). Catalyzes the formation of L-cystathionine from O-succinyl-L-homoserine (OSHS) and L-cysteine, via a gamma-replacement reaction. In the absence of thiol, catalyzes gamma-elimination to form 2-oxobutanoate, succinate and ammonia. The polypeptide is Cystathionine gamma-synthase (metB) (Mycobacterium leprae (strain TN)).